We begin with the raw amino-acid sequence, 356 residues long: MADVIKRCILGPTEAGWFVAKSQIKKPVDQRPVILTHCKLHSKMLEPKAIVYKKNSSAIPKRVDNILLRSQKPKHIECLLVDSKITKTRSLLKRFGSCLDETSTIVLLNQSVSLWEDCYSLFPKTETRPRIYLGRFQTLFKSFPFNLISDSFSYRLNLSKLPRTPLEKCTVARACKQFPLNQRSPLLDLMGSFERDYVNFSNFSQMLSAQLCDSMAFLIQIFPTPLLRQKAANAWIEVLSKLPYFHILDKSFFSPHLLLQSSENQACKFFNIGPQVYFDPRERLLHVKELLKFALKHIDSNDSLFTFLKQTCYTCDSPYAKVFQPDKQSFHSIISRKRLAHLEKEYFDKDVSKLVL.

In terms of assembly, component of a complex, at least composed of cbp7 and cbp8.

The protein resides in the mitochondrion. Its function is as follows. Translation factor for cob1/cytochrome b; plays a role in cob1 mRNA stabilization and required for correct folding of the protein. The protein is Cytochrome b translation regulator cbp7 of Schizosaccharomyces pombe (strain 972 / ATCC 24843) (Fission yeast).